A 139-amino-acid chain; its full sequence is Protein Turandot B (139 aa).

A signal peptide spans 1 to 21; it reads MNFNMSMICFALLLIVTLCSA.

It belongs to the Turandot family.

It localises to the secreted. Functionally, a humoral factor that may play a role in stress tolerance. The protein is Protein Turandot B of Drosophila yakuba (Fruit fly).